The following is a 736-amino-acid chain: Elongation factor 2 (736 aa).

The region spanning aspartate 19 to arginine 262 is the tr-type G domain. GTP is bound by residues alanine 28–threonine 35, aspartate 94–histidine 98, and asparagine 148–aspartate 151. Histidine 602 is subject to Diphthamide.

The protein belongs to the TRAFAC class translation factor GTPase superfamily. Classic translation factor GTPase family. EF-G/EF-2 subfamily.

The protein resides in the cytoplasm. In terms of biological role, catalyzes the GTP-dependent ribosomal translocation step during translation elongation. During this step, the ribosome changes from the pre-translocational (PRE) to the post-translocational (POST) state as the newly formed A-site-bound peptidyl-tRNA and P-site-bound deacylated tRNA move to the P and E sites, respectively. Catalyzes the coordinated movement of the two tRNA molecules, the mRNA and conformational changes in the ribosome. In Aeropyrum pernix (strain ATCC 700893 / DSM 11879 / JCM 9820 / NBRC 100138 / K1), this protein is Elongation factor 2 (fusA).